We begin with the raw amino-acid sequence, 397 residues long: Tryptophan synthase beta chain (397 aa).

Residue K87 is modified to N6-(pyridoxal phosphate)lysine.

It belongs to the TrpB family. As to quaternary structure, tetramer of two alpha and two beta chains. It depends on pyridoxal 5'-phosphate as a cofactor.

It catalyses the reaction (1S,2R)-1-C-(indol-3-yl)glycerol 3-phosphate + L-serine = D-glyceraldehyde 3-phosphate + L-tryptophan + H2O. The protein operates within amino-acid biosynthesis; L-tryptophan biosynthesis; L-tryptophan from chorismate: step 5/5. Functionally, the beta subunit is responsible for the synthesis of L-tryptophan from indole and L-serine. In Salmonella arizonae (strain ATCC BAA-731 / CDC346-86 / RSK2980), this protein is Tryptophan synthase beta chain.